Consider the following 508-residue polypeptide: Catalase (508 aa).

The first 21 residues, methionine 1–alanine 21, serve as a signal peptide directing secretion. Residues histidine 72 and asparagine 145 contribute to the active site. Tyrosine 353 lines the heme pocket. Positions proline 373–leucine 392 are enriched in polar residues. Residues proline 373–aspartate 396 are disordered.

This sequence belongs to the catalase family. Heme is required as a cofactor.

Its subcellular location is the periplasm. The enzyme catalyses 2 H2O2 = O2 + 2 H2O. Decomposes hydrogen peroxide into water and oxygen; serves to protect cells from the toxic effects of hydrogen peroxide. In Vibrio vulnificus (strain CMCP6), this protein is Catalase.